A 263-amino-acid polypeptide reads, in one-letter code: tRNA pseudouridine synthase A (263 aa).

Residue Asp-53 is the Nucleophile of the active site. Tyr-111 contributes to the substrate binding site. Residues 232-263 (TAPGHGLISGRSNMTNGKLENNKTTNPCVTKY) are disordered. Over residues 241–263 (GRSNMTNGKLENNKTTNPCVTKY) the composition is skewed to polar residues.

It belongs to the tRNA pseudouridine synthase TruA family. In terms of assembly, homodimer.

The enzyme catalyses uridine(38/39/40) in tRNA = pseudouridine(38/39/40) in tRNA. Its function is as follows. Formation of pseudouridine at positions 38, 39 and 40 in the anticodon stem and loop of transfer RNAs. The protein is tRNA pseudouridine synthase A of Halalkalibacterium halodurans (strain ATCC BAA-125 / DSM 18197 / FERM 7344 / JCM 9153 / C-125) (Bacillus halodurans).